We begin with the raw amino-acid sequence, 151 residues long: UPF0208 membrane protein plu3094 (151 aa).

The next 2 membrane-spanning stretches (helical) occupy residues 46–65 and 69–91; these read FGIR…QIAL and LGPA…WWLG.

This sequence belongs to the UPF0208 family.

The protein resides in the cell inner membrane. In Photorhabdus laumondii subsp. laumondii (strain DSM 15139 / CIP 105565 / TT01) (Photorhabdus luminescens subsp. laumondii), this protein is UPF0208 membrane protein plu3094.